Consider the following 651-residue polypeptide: Probable potassium transport system protein Kup (651 aa).

Transmembrane regions (helical) follow at residues 41–61 (LVLG…IYAF), 82–102 (VVSL…VLFV), 130–150 (LILG…VITP), 163–183 (IVAP…LVTL), 194–214 (VAIV…ASGL), 235–255 (FLMI…LAMT), 276–296 (WLWI…AFIL), 309–329 (MMPS…TVIA), 366–386 (IYIP…VLGF), 395–415 (AYGI…YIVM), 426–446 (ALPI…ANII), and 450–470 (EGGW…WTWV).

Belongs to the HAK/KUP transporter (TC 2.A.72) family.

Its subcellular location is the cell inner membrane. It carries out the reaction K(+)(in) + H(+)(in) = K(+)(out) + H(+)(out). Its function is as follows. Transport of potassium into the cell. Likely operates as a K(+):H(+) symporter. This Brucella anthropi (strain ATCC 49188 / DSM 6882 / CCUG 24695 / JCM 21032 / LMG 3331 / NBRC 15819 / NCTC 12168 / Alc 37) (Ochrobactrum anthropi) protein is Probable potassium transport system protein Kup.